The sequence spans 380 residues: Ceramide-binding protein svf1 (380 aa).

The segment at 1–18 (MKAWLQSSISYYTGTAEP) is peripherally associates with membranes.

It belongs to the SVF1 family.

The protein resides in the golgi apparatus. It is found in the cis-Golgi network membrane. The protein localises to the endoplasmic reticulum membrane. Its subcellular location is the cytoplasm. It localises to the nucleus. Its function is as follows. Ceramide-binding protein that may transfer ceramides from the endoplasmic reticulum membrane to the cis-Golgi network membrane, and is thereby required for the biosynthesis of complex sphingolipids. This is Ceramide-binding protein svf1 from Schizosaccharomyces pombe (strain 972 / ATCC 24843) (Fission yeast).